A 458-amino-acid polypeptide reads, in one-letter code: MKSNFSKFKDFIKYKKVAVVGIGVSNRPLIKFLVKLGAKVTAFDKKHREKLGSISLELEEIGVDLVLGENYLDKLDGYDVIFKTPSMRIDRPEFVKAKESGAYITSEMEEFIKYCPAKVFGITGSDGKTTTTTLVYEMLKKEGYRTWVGGNIGTPLFANIEEMKEDHMVVLELSSFQLMTMDVSPEISLITNLSPNHLDVHKDFEEYVWAKKNIFKYQSSNNLLVLNKDDDLTNGMENEALGDVLKFSLVEKVYNGAYLSNNKLTMQGKEVCDSKDIKLKGRHNIANLLAAFCMVNKYVSIDSMKYVATNFSGVEHRCEFIREVNGVKYYNDSIASSPSRTLAGLNSFERPVILIAGGYDKKIPFKPLAEGGYDKIKILILMGDTKNKIKSAFEKVISHKKCEIEIVIVNSMEEAVKVADNMAEKGDIITLSPACASFDMYPNFEIRGNEFKNIVNSL.

ATP is bound at residue 124 to 130 (GSDGKTT).

It belongs to the MurCDEF family.

It is found in the cytoplasm. It catalyses the reaction UDP-N-acetyl-alpha-D-muramoyl-L-alanine + D-glutamate + ATP = UDP-N-acetyl-alpha-D-muramoyl-L-alanyl-D-glutamate + ADP + phosphate + H(+). It functions in the pathway cell wall biogenesis; peptidoglycan biosynthesis. Functionally, cell wall formation. Catalyzes the addition of glutamate to the nucleotide precursor UDP-N-acetylmuramoyl-L-alanine (UMA). The sequence is that of UDP-N-acetylmuramoylalanine--D-glutamate ligase from Clostridium botulinum (strain 657 / Type Ba4).